The chain runs to 503 residues: Maturase K (503 aa).

Belongs to the intron maturase 2 family. MatK subfamily.

It localises to the plastid. Its subcellular location is the chloroplast. Functionally, usually encoded in the trnK tRNA gene intron. Probably assists in splicing its own and other chloroplast group II introns. This chain is Maturase K, found in Callistemon polandii (Gold-tipped bottlebrush).